A 723-amino-acid chain; its full sequence is Fatty acid oxidation complex subunit alpha (723 aa).

An enoyl-CoA hydratase/isomerase region spans residues 1–189 (MIYQAKTLQV…KVGLLDAIVD (189 aa)). Residue aspartate 296 coordinates substrate. Residues 311–723 (SQDTQHAAVL…FYSAQQVSAL (413 aa)) form a 3-hydroxyacyl-CoA dehydrogenase region. Residues methionine 325, aspartate 344, 401 to 403 (VVE), lysine 408, and serine 430 contribute to the NAD(+) site. Histidine 451 (for 3-hydroxyacyl-CoA dehydrogenase activity) is an active-site residue. Asparagine 454 serves as a coordination point for NAD(+). The substrate site is built by asparagine 501 and tyrosine 661.

The protein in the N-terminal section; belongs to the enoyl-CoA hydratase/isomerase family. This sequence in the C-terminal section; belongs to the 3-hydroxyacyl-CoA dehydrogenase family. In terms of assembly, heterotetramer of two alpha chains (FadB) and two beta chains (FadA).

It carries out the reaction a (3S)-3-hydroxyacyl-CoA + NAD(+) = a 3-oxoacyl-CoA + NADH + H(+). The catalysed reaction is a (3S)-3-hydroxyacyl-CoA = a (2E)-enoyl-CoA + H2O. It catalyses the reaction a 4-saturated-(3S)-3-hydroxyacyl-CoA = a (3E)-enoyl-CoA + H2O. The enzyme catalyses (3S)-3-hydroxybutanoyl-CoA = (3R)-3-hydroxybutanoyl-CoA. It carries out the reaction a (3Z)-enoyl-CoA = a 4-saturated (2E)-enoyl-CoA. The catalysed reaction is a (3E)-enoyl-CoA = a 4-saturated (2E)-enoyl-CoA. It functions in the pathway lipid metabolism; fatty acid beta-oxidation. Functionally, involved in the aerobic and anaerobic degradation of long-chain fatty acids via beta-oxidation cycle. Catalyzes the formation of 3-oxoacyl-CoA from enoyl-CoA via L-3-hydroxyacyl-CoA. It can also use D-3-hydroxyacyl-CoA and cis-3-enoyl-CoA as substrate. The chain is Fatty acid oxidation complex subunit alpha from Vibrio cholerae serotype O1 (strain ATCC 39315 / El Tor Inaba N16961).